Consider the following 655-residue polypeptide: Golgi integral membrane protein 4 (655 aa).

Gly-2 carries the N-myristoyl glycine lipid modification. The Cytoplasmic portion of the chain corresponds to 2–12 (GNGMCSRKQKR). Residues 13-33 (IFQTLLLLTVVFGFLYGAMLY) traverse the membrane as a helical; Signal-anchor for type II membrane protein segment. Residues 34–655 (LELQTQLRKA…AEKSHRRAEM (622 aa)) are Lumenal-facing. The interval 38–107 (TQLRKAEAVA…ETLNKGRQDS (70 aa)) is golgi targeting. The stretch at 66-216 (EHRSRLEKSL…KQLKDTLNRI (151 aa)) forms a coiled coil. An endosome targeting region spans residues 80–175 (LEHKKAKEDF…QELSKLKETV (96 aa)). Positions 122–145 (KSQHEELRKQHSDLEEEHRKQGED) are disordered. The span at 123-145 (SQHEELRKQHSDLEEEHRKQGED) shows a compositional bias: basic and acidic residues. The tract at residues 176-220 (YNLREENRQLRKAHQDIHTQLQDVKTQVAEYKQLKDTLNRIPSFR) is golgi targeting. N-linked (GlcNAc...) asparagine glycosylation occurs at Asn-229. Disordered regions lie at residues 256 to 275 (QPNHEAGPRRMEEKPLSSMQ) and 285 to 655 (EQNQ…RAEM). Basic and acidic residues-rich tracts occupy residues 261 to 270 (AGPRRMEEKP), 290 to 307 (EPREPEERQVEEEHRKAL), 319 to 328 (EHLEEEHDPS), and 348 to 360 (LDGHPQAEVEHST). Ser-328 is modified (phosphoserine). The span at 361-370 (KAATNFQSPY) shows a compositional bias: polar residues. Residues 381–398 (ARRDEEAQRLREHQEALH) are compositionally biased toward basic and acidic residues. 2 stretches are compositionally biased toward low complexity: residues 399–423 (QQRLHGQLLRQQQQQQFLAREMAQQ) and 433–442 (QQHQEQLRQQ). The span at 468–508 (AYDRDNQRQDEAEGDPGNRQELREPGHQEGDPEVEADRAAV) shows a compositional bias: basic and acidic residues. The residue at position 540 (Ser-540) is a Phosphoserine. Residues 567–589 (QQEDNVDEQYQDEGEEEVQEDLT) are compositionally biased toward acidic residues. Tyr-576 carries the post-translational modification Phosphotyrosine. Thr-589 is subject to Phosphothreonine. A compositionally biased stretch (basic and acidic residues) spans 590-620 (EEKKREMEHNVEETYGEHPDDKNNDGEEQGV). Tyr-633 carries the phosphotyrosine modification. A compositionally biased stretch (acidic residues) spans 633 to 642 (YEEEEDEEDG).

This sequence belongs to the GOLIM4 family. In terms of processing, phosphorylated by c-AMP-dependent kinases most probably in its lumenal part. Post-translationally, O-glycosylated; modified by sialic acid residues. N-glycosylated; N-glycans are of the complex type and modified by sialic acid residues. As to expression, expressed by spermatozoa (at protein level).

The protein localises to the golgi apparatus. Its subcellular location is the golgi stack membrane. It is found in the endosome membrane. It localises to the membrane. Functionally, plays a role in endosome to Golgi protein trafficking; mediates protein transport along the late endosome-bypass pathway from the early endosome to the Golgi. This is Golgi integral membrane protein 4 (Golim4) from Mus musculus (Mouse).